The chain runs to 677 residues: MYKNLHPKYFRLAAEYDPSGDQPKAIGELSDRIESGETDIVLLGATGTGKSATIAWLIEKLARPTLIIAHNKTLAAQLANEFRKFFPDNAVEYFVSYYDYYQPEAYVPKTDTFIEKDASVNSEVERLRHRATTSLLTRRDVIVVATVSCIYGLGAPSEYLKAGFRLEVGQKISQRVLLERFTQLQYNRNDVGFERGNFRVRGDTIEIIPVYEEYTVRIEMWGDEIERVLCLHPVTGNLLSEQRGVLIFPASHYVTSSENLKRAIVDIRKELQQRLRYFKRNNSLLEAQRLETRTEYDIELMEQLGFCSGIENYSRHIDGRAPGEPPFCLLDYFDDDFLTVIDESHVTVPQIGSMHAGDFSRKKALVENGFRLPSAIDNRPLCFDEFRQRVGQVIYLSATPGKYELSKSDGVVEQIIRPTGLVDPKITVKPIKGQIDDLLEEIRKRKLLSERVLVTTLTKRMAEELTDFLSEAGVNVSYLHSDIDTLHRVELLTSLRMGRIDVLVGINLLREGLDLPEVSLVAILDADKEGFLRSTTSFIQTIGRAARHVSGEVHMYADNMTESMQKSIDETNRRRRIQQDYNRKMGVTPVPIKKTVSDITEVLSRPSRKIDCTILDSLPDPKIDGKQIKSHIKSLEAKMYMAAESLMFEEAAELRDEIQSLKEKFLKPRGSGGKIRQ.

One can recognise a Helicase ATP-binding domain in the interval 31–417; sequence DRIESGETDI…SDGVVEQIIR (387 aa). 44 to 51 lines the ATP pocket; that stretch reads GATGTGKS. The Beta-hairpin motif lies at 97–120; it reads YYDYYQPEAYVPKTDTFIEKDASV. Positions 434 to 596 constitute a Helicase C-terminal domain; it reads QIDDLLEEIR…VTPVPIKKTV (163 aa). The UVR domain occupies 629–664; sequence KSHIKSLEAKMYMAAESLMFEEAAELRDEIQSLKEK.

It belongs to the UvrB family. Forms a heterotetramer with UvrA during the search for lesions. Interacts with UvrC in an incision complex.

The protein resides in the cytoplasm. Functionally, the UvrABC repair system catalyzes the recognition and processing of DNA lesions. A damage recognition complex composed of 2 UvrA and 2 UvrB subunits scans DNA for abnormalities. Upon binding of the UvrA(2)B(2) complex to a putative damaged site, the DNA wraps around one UvrB monomer. DNA wrap is dependent on ATP binding by UvrB and probably causes local melting of the DNA helix, facilitating insertion of UvrB beta-hairpin between the DNA strands. Then UvrB probes one DNA strand for the presence of a lesion. If a lesion is found the UvrA subunits dissociate and the UvrB-DNA preincision complex is formed. This complex is subsequently bound by UvrC and the second UvrB is released. If no lesion is found, the DNA wraps around the other UvrB subunit that will check the other stand for damage. In Tropheryma whipplei (strain TW08/27) (Whipple's bacillus), this protein is UvrABC system protein B.